We begin with the raw amino-acid sequence, 352 residues long: Rhodopsin, freshwater form (352 aa).

The Extracellular portion of the chain corresponds to 1-36; that stretch reads MNGTEGPNFYVPMSNVTGVVRSPFEYPQYYLAEPWA. N-linked (GlcNAc...) asparagine glycans are attached at residues Asn2 and Asn15. Residues 37-61 traverse the membrane as a helical segment; the sequence is YSALAAYMFFLIIAGFPINFLTLYV. The Cytoplasmic portion of the chain corresponds to 62–73; it reads TIEHKKLRTPLN. The helical transmembrane segment at 74–98 threads the bilayer; that stretch reads YILLNLAVADLFMVFGGFTTTMYTS. Residues 99–113 lie on the Extracellular side of the membrane; the sequence is MHGYFVFGPTGCNIE. Cys110 and Cys187 form a disulfide bridge. Residues 114 to 133 form a helical membrane-spanning segment; it reads GFFATLGGEIALWCLVVLAV. Over 134 to 152 the chain is Cytoplasmic; that stretch reads ERWMVVCKPMSNFRFGENH. A helical transmembrane segment spans residues 153 to 176; that stretch reads AIMGVAFTWVMALACAAPPLFGWS. Residues 177–202 lie on the Extracellular side of the membrane; sequence RYIPEGMQCSCGMDHYAPNPETYNES. Asn200 carries an N-linked (GlcNAc...) asparagine glycan. Residues 203 to 230 traverse the membrane as a helical segment; it reads FVIYMFICHFTIPLTVISFCYGRLVCTV. At 231 to 252 the chain is on the cytoplasmic side; sequence KEATAQQQESETTQRAEREVTR. The chain crosses the membrane as a helical span at residues 253 to 276; that stretch reads MVIIMVISFLVCWVPYASVAWYIF. Over 277–284 the chain is Extracellular; sequence THQGSSFG. The chain crosses the membrane as a helical span at residues 285 to 309; it reads PIFMTIPAFFAKSSSLYNPLIYICM. Lys296 is subject to N6-(retinylidene)lysine. Residues 310–352 are Cytoplasmic-facing; that stretch reads NKQSRNCMITTLCCGKNPFEEEEGASTTASKTEASSVSSVSPA. Residue Cys323 is the site of S-palmitoyl cysteine attachment. The disordered stretch occupies residues 330–352; that stretch reads EEEGASTTASKTEASSVSSVSPA. Residues 334-352 are compositionally biased toward low complexity; that stretch reads ASTTASKTEASSVSSVSPA.

This sequence belongs to the G-protein coupled receptor 1 family. Opsin subfamily. Post-translationally, phosphorylated on some or all of the serine and threonine residues present in the C-terminal region. Rod shaped photoreceptor cells which mediates vision in dim light.

The protein resides in the membrane. Functionally, visual pigments such as rhodopsin and porphyropsin are light-absorbing molecules that mediate vision. Rhodopsin consists of an apoprotein, opsin, covalently linked to 11-cis-retinal. This receptor is coupled to the activation of phospholipase C. Porphyropsin consists of opsin covalently linked to 11-cis 3,4-didehydroretinal. In Anguilla anguilla (European freshwater eel), this protein is Rhodopsin, freshwater form.